The chain runs to 289 residues: Transmembrane protein 163 (289 aa).

The interval Met-1 to Glu-65 is disordered. The Cytoplasmic portion of the chain corresponds to Met-1–Ala-88. Phosphoserine is present on Ser-11. The span at Thr-16–Leu-36 shows a compositional bias: pro residues. The segment at Glu-42–Ser-72 is required for interaction with MCOLN1. Ser-55, Ser-57, and Ser-61 each carry phosphoserine. The helical transmembrane segment at Leu-89–Val-109 threads the bilayer. Residues Ser-110–Ala-116 are Extracellular-facing. The helical transmembrane segment at Ser-117–Trp-137 threads the bilayer. Residues Arg-138–Arg-150 are Cytoplasmic-facing. Residues Glu-151–Val-171 traverse the membrane as a helical segment. The Extracellular segment spans residues Lys-172–Asp-187. Residues Phe-188 to Phe-208 traverse the membrane as a helical segment. Residues Met-209–Arg-217 lie on the Cytoplasmic side of the membrane. Residues Ala-218–Leu-238 traverse the membrane as a helical segment. The Extracellular segment spans residues Ser-239–Ser-255. The helical transmembrane segment at Ile-256 to Val-276 threads the bilayer. At Pro-277–Glu-289 the chain is on the cytoplasmic side.

Belongs to the TMEM163 family. In terms of assembly, homodimer. Interacts with MCOLN1/TRPML1. Interacts with SLC30A1, SLC30A2, SLC30A3 and SLC30A4. As to expression, widely expressed. High expression is detected in brain, lung and testis.

The protein resides in the cytoplasmic vesicle. It is found in the secretory vesicle. The protein localises to the synaptic vesicle membrane. It localises to the early endosome membrane. Its subcellular location is the late endosome membrane. The protein resides in the lysosome membrane. It is found in the cell membrane. The enzyme catalyses Zn(2+)(in) = Zn(2+)(out). In terms of biological role, zinc ion transporter that mediates zinc efflux and plays a crucial role in intracellular zinc homeostasis. Binds the divalent cations Zn(2+), Ni(2+), and to a minor extent Cu(2+). Is a functional modulator of P2X purinoceptors, including P2RX1, P2RX3, P2RX4 and P2RX7. Plays a role in central nervous system development and is required for myelination, and survival and proliferation of oligodendrocytes. The protein is Transmembrane protein 163 (TMEM163) of Homo sapiens (Human).